Reading from the N-terminus, the 614-residue chain is Heat shock protein SSB1 (614 aa).

The segment at 1–392 (MSTEVYDGAI…ILSGKATSAE (392 aa)) is nucleotide binding domain (NBD). ATP-binding positions include 16 to 18 (TTY), K74, 206 to 208 (GGT), 272 to 279 (ERAKRTLS), and G343. The interval 393 to 403 (TADLLLLDVVP) is inter-domain linker. Positions 404–614 (LSLGVAMEGN…RAVTKAMSSR (211 aa)) are substrate binding domain (SBD). The lid domain (SBDalpha) stretch occupies residues 517–613 (TSEIENMISE…KRAVTKAMSS (97 aa)). The Nuclear export signal motif lies at 575-583 (IENTMSEAM).

This sequence belongs to the heat shock protein 70 family. As to quaternary structure, interacts with HAT1 in starvation conditions.

It is found in the nucleus. The protein resides in the cytoplasm. The catalysed reaction is ATP + H2O = ADP + phosphate + H(+). Its function is as follows. Chaperone that interacts with the histone acetyltransferase HAT1 and mediates its translocation from the nucleus to the cytoplasm during germination and starvation conditions. Within the cytoplasm, HAT1 regulates autophagy via acetylation of the autophagy-related proteins ATG3 and ATG9. The polypeptide is Heat shock protein SSB1 (Pyricularia oryzae (strain 70-15 / ATCC MYA-4617 / FGSC 8958) (Rice blast fungus)).